The sequence spans 193 residues: Segregation and condensation protein B (193 aa).

This sequence belongs to the ScpB family. As to quaternary structure, homodimer. Homodimerization may be required to stabilize the binding of ScpA to the Smc head domains. Component of a cohesin-like complex composed of ScpA, ScpB and the Smc homodimer, in which ScpA and ScpB bind to the head domain of Smc. The presence of the three proteins is required for the association of the complex with DNA.

It localises to the cytoplasm. Participates in chromosomal partition during cell division. May act via the formation of a condensin-like complex containing Smc and ScpA that pull DNA away from mid-cell into both cell halves. The sequence is that of Segregation and condensation protein B from Clostridium botulinum (strain 657 / Type Ba4).